The following is a 1049-amino-acid chain: Dyslexia-associated protein KIAA0319-like protein (1049 aa).

The Cytoplasmic segment spans residues 1–29 (MEKRLGVKPNPASWILSGYYWQTSAKWLR). Residues 30-50 (TLYLFYTCFCFSVLWLSTDAS) form a helical membrane-spanning segment. Residues 49 to 127 (ASESRCQQGK…AFRTHSSNSM (79 aa)) form the MANSC domain. At 51-932 (ESRCQQGKTQ…ESNCEWSVLY (882 aa)) the chain is on the extracellular side. The tract at residues 234–277 (TTDLTAELPGGPKNVSAQPEIPEGLATTPSTQQVKSSEKTQIAV) is disordered. 3 N-linked (GlcNAc...) asparagine glycosylation sites follow: N247, N395, and N487. PKD domains are found at residues 310–401 (VVSA…VKPE), 409–498 (IAIV…VNKA), 504–594 (VANA…VQPE), 600–688 (QADA…VKEE), and 694–785 (IAKI…VKPD). A helical transmembrane segment spans residues 933-953 (VIIATFVIVVALGILSWTVIC). Over 954–1049 (CCKRQKGKPK…KARSPREEIL (96 aa)) the chain is Cytoplasmic. Residue T974 is modified to Phosphothreonine. Phosphoserine occurs at positions 978, 1009, and 1031. A disordered region spans residues 1022–1049 (GKLLHGQNGSVPNGQTPLKARSPREEIL). Residues 1028-1037 (QNGSVPNGQT) show a composition bias toward polar residues. T1037 carries the post-translational modification Phosphothreonine.

Interacts with RTN4R. N-glycosylated.

The protein resides in the cytoplasmic granule membrane. The protein localises to the golgi apparatus membrane. It localises to the golgi apparatus. Its subcellular location is the trans-Golgi network membrane. It is found in the cell membrane. Its function is as follows. Possible role in axon guidance through interaction with RTN4R. The chain is Dyslexia-associated protein KIAA0319-like protein from Pongo abelii (Sumatran orangutan).